Consider the following 156-residue polypeptide: Small ribosomal subunit protein uS7 (156 aa).

This sequence belongs to the universal ribosomal protein uS7 family. In terms of assembly, part of the 30S ribosomal subunit. Contacts proteins S9 and S11.

Its function is as follows. One of the primary rRNA binding proteins, it binds directly to 16S rRNA where it nucleates assembly of the head domain of the 30S subunit. Is located at the subunit interface close to the decoding center, probably blocks exit of the E-site tRNA. This chain is Small ribosomal subunit protein uS7, found in Metamycoplasma arthritidis (strain 158L3-1) (Mycoplasma arthritidis).